A 68-amino-acid polypeptide reads, in one-letter code: Large ribosomal subunit protein bL28 (68 aa).

The tract at residues 1–30 is disordered; sequence MAKICDHCGKKPQSGNNVSHANNKSKRRFE. Polar residues predominate over residues 13-22; that stretch reads QSGNNVSHAN.

Belongs to the bacterial ribosomal protein bL28 family.

This chain is Large ribosomal subunit protein bL28, found in Solidesulfovibrio magneticus (strain ATCC 700980 / DSM 13731 / RS-1) (Desulfovibrio magneticus).